Consider the following 314-residue polypeptide: Olfactory receptor 5B12 (314 aa).

Topologically, residues 1 to 23 (MENNTEVTEFILVGLTDDPELQI) are extracellular. Asn3 carries N-linked (GlcNAc...) asparagine glycosylation. A helical membrane pass occupies residues 24–44 (PLFIVFLFIYLITLVGNLGMI). Residues 45-52 (ELILLDSC) are Cytoplasmic-facing. Residues 53 to 73 (LHTPMYFFLSNLSLVDFGYSS) form a helical membrane-spanning segment. The Extracellular portion of the chain corresponds to 74–97 (AVTPKVMVGFLTGDKFILYNACAT). Residues Cys95 and Cys187 are joined by a disulfide bond. The chain crosses the membrane as a helical span at residues 98 to 118 (QFFFFVAFITAESFLLASMAY). Residues 119–137 (DRYAALCKPLHYTTTMTTN) lie on the Cytoplasmic side of the membrane. A helical membrane pass occupies residues 138–158 (VCACLAIGSYICGFLNASIHT). Residues 159 to 194 (GNTFRLSFCRSNVVEHFFCDAPPLLTLSCSDNYISE) are Extracellular-facing. The helical transmembrane segment at 195 to 215 (MVIFFVVGFNDLFSILVILIS) threads the bilayer. Topologically, residues 216–235 (YLFIFITIMKMRSPEGRQKA) are cytoplasmic. The chain crosses the membrane as a helical span at residues 236-256 (FSTCASHLTAVSIFYGTGIFM). The Extracellular portion of the chain corresponds to 257–269 (YLRPNSSHFMGTD). Residue Asn261 is glycosylated (N-linked (GlcNAc...) asparagine). Residues 270–290 (KMASVFYAIVIPMLNPLVYSL) traverse the membrane as a helical segment. Topologically, residues 291 to 314 (RNKEVKSAFKKTVGKAKASIGFIF) are cytoplasmic.

It belongs to the G-protein coupled receptor 1 family.

The protein localises to the cell membrane. Functionally, odorant receptor. This chain is Olfactory receptor 5B12 (OR5B12), found in Homo sapiens (Human).